The primary structure comprises 1203 residues: DNA-directed RNA polymerase subunit beta (1203 aa).

Residues 1174–1195 (AAQEAKAAFEAEEAEKATKAEA) show a composition bias toward basic and acidic residues. The segment at 1174–1203 (AAQEAKAAFEAEEAEKATKAEATEEAAEQE) is disordered.

This sequence belongs to the RNA polymerase beta chain family. The RNAP catalytic core consists of 2 alpha, 1 beta, 1 beta' and 1 omega subunit. When a sigma factor is associated with the core the holoenzyme is formed, which can initiate transcription.

The enzyme catalyses RNA(n) + a ribonucleoside 5'-triphosphate = RNA(n+1) + diphosphate. Functionally, DNA-dependent RNA polymerase catalyzes the transcription of DNA into RNA using the four ribonucleoside triphosphates as substrates. The sequence is that of DNA-directed RNA polymerase subunit beta from Streptococcus pneumoniae (strain JJA).